Here is a 363-residue protein sequence, read N- to C-terminus: Caffeic acid 3-O-methyltransferase (363 aa).

Position 130 to 136 (130 to 136 (MNQDKVL)) interacts with substrate. Residues 162 to 180 (AFEYHGKDPRFNKVFNQGM) form a substrate binding region. S-adenosyl-L-methionine contacts are provided by glycine 208, aspartate 231, aspartate 251, methionine 252, and lysine 265. Histidine 269 acts as the Proton acceptor in catalysis.

The protein belongs to the class I-like SAM-binding methyltransferase superfamily. Cation-independent O-methyltransferase family. COMT subfamily. As to quaternary structure, homodimer.

It carries out the reaction (E)-caffeate + S-adenosyl-L-methionine = (E)-ferulate + S-adenosyl-L-homocysteine + H(+). The protein operates within aromatic compound metabolism; phenylpropanoid biosynthesis. In terms of biological role, catalyzes the conversion of caffeic acid to ferulic acid and of 5-hydroxyferulic acid to sinapic acid. The resulting products may subsequently be converted to the corresponding alcohols that are incorporated into lignins. The sequence is that of Caffeic acid 3-O-methyltransferase (COMT1) from Catharanthus roseus (Madagascar periwinkle).